The primary structure comprises 353 residues: D-alanine--D-alanine ligase (353 aa).

An ATP-grasp domain is found at 141 to 349 (KAAFAAAGLS…LPQLVAELVD (209 aa)). ATP is bound at residue 176–231 (EQELGYPCFVKPANLGSSVGITKANNRDELLAGLHQAAALDPRLLVEQGVNARELE). Mg(2+)-binding residues include aspartate 302, glutamate 316, and asparagine 318.

Belongs to the D-alanine--D-alanine ligase family. Mg(2+) serves as cofactor. Requires Mn(2+) as cofactor.

It localises to the cytoplasm. It catalyses the reaction 2 D-alanine + ATP = D-alanyl-D-alanine + ADP + phosphate + H(+). It participates in cell wall biogenesis; peptidoglycan biosynthesis. Its function is as follows. Cell wall formation. The sequence is that of D-alanine--D-alanine ligase from Synechococcus sp. (strain WH7803).